Here is a 147-residue protein sequence, read N- to C-terminus: 3-hydroxyacyl-[acyl-carrier-protein] dehydratase FabZ (147 aa).

Residue H53 is part of the active site.

The protein belongs to the thioester dehydratase family. FabZ subfamily.

The protein localises to the cytoplasm. The enzyme catalyses a (3R)-hydroxyacyl-[ACP] = a (2E)-enoyl-[ACP] + H2O. In terms of biological role, involved in unsaturated fatty acids biosynthesis. Catalyzes the dehydration of short chain beta-hydroxyacyl-ACPs and long chain saturated and unsaturated beta-hydroxyacyl-ACPs. In Synechococcus sp. (strain WH7803), this protein is 3-hydroxyacyl-[acyl-carrier-protein] dehydratase FabZ.